The sequence spans 87 residues: Putative septation protein SpoVG (87 aa).

Belongs to the SpoVG family.

Its function is as follows. Could be involved in septation. The polypeptide is Putative septation protein SpoVG (Agathobacter rectalis (strain ATCC 33656 / DSM 3377 / JCM 17463 / KCTC 5835 / VPI 0990) (Eubacterium rectale)).